A 255-amino-acid polypeptide reads, in one-letter code: Hydroxyacylglutathione hydrolase (255 aa).

Positions 52, 54, 56, 57, 108, 130, and 168 each coordinate Zn(2+).

It belongs to the metallo-beta-lactamase superfamily. Glyoxalase II family. Monomer. Requires Zn(2+) as cofactor.

The enzyme catalyses an S-(2-hydroxyacyl)glutathione + H2O = a 2-hydroxy carboxylate + glutathione + H(+). The protein operates within secondary metabolite metabolism; methylglyoxal degradation; (R)-lactate from methylglyoxal: step 2/2. In terms of biological role, thiolesterase that catalyzes the hydrolysis of S-D-lactoyl-glutathione to form glutathione and D-lactic acid. This chain is Hydroxyacylglutathione hydrolase, found in Albidiferax ferrireducens (strain ATCC BAA-621 / DSM 15236 / T118) (Rhodoferax ferrireducens).